Here is a 293-residue protein sequence, read N- to C-terminus: 4-diphosphocytidyl-2-C-methyl-D-erythritol kinase (293 aa).

The active site involves Lys11. Position 96–106 (Pro96–Ser106) interacts with ATP. Asp138 is an active-site residue.

Belongs to the GHMP kinase family. IspE subfamily.

It catalyses the reaction 4-CDP-2-C-methyl-D-erythritol + ATP = 4-CDP-2-C-methyl-D-erythritol 2-phosphate + ADP + H(+). It participates in isoprenoid biosynthesis; isopentenyl diphosphate biosynthesis via DXP pathway; isopentenyl diphosphate from 1-deoxy-D-xylulose 5-phosphate: step 3/6. Catalyzes the phosphorylation of the position 2 hydroxy group of 4-diphosphocytidyl-2C-methyl-D-erythritol. This chain is 4-diphosphocytidyl-2-C-methyl-D-erythritol kinase, found in Xanthobacter autotrophicus (strain ATCC BAA-1158 / Py2).